The sequence spans 436 residues: Ribosomal protein uS12 methylthiotransferase RimO (436 aa).

An MTTase N-terminal domain is found at 2–114 (PNLYLVSLGC…IDEMILKKQN (113 aa)). [4Fe-4S] cluster is bound by residues Cys11, Cys45, Cys77, Cys146, Cys150, and Cys153. Residues 132-363 (TGSSYHAYIK…IKKQIEGSFK (232 aa)) enclose the Radical SAM core domain. Residues 363–434 (KSLVGEVIKV…KDKLIGEIIC (72 aa)) enclose the TRAM domain.

Belongs to the methylthiotransferase family. RimO subfamily. Requires [4Fe-4S] cluster as cofactor.

It is found in the cytoplasm. It catalyses the reaction L-aspartate(89)-[ribosomal protein uS12]-hydrogen + (sulfur carrier)-SH + AH2 + 2 S-adenosyl-L-methionine = 3-methylsulfanyl-L-aspartate(89)-[ribosomal protein uS12]-hydrogen + (sulfur carrier)-H + 5'-deoxyadenosine + L-methionine + A + S-adenosyl-L-homocysteine + 2 H(+). Catalyzes the methylthiolation of an aspartic acid residue of ribosomal protein uS12. In Campylobacter fetus subsp. fetus (strain 82-40), this protein is Ribosomal protein uS12 methylthiotransferase RimO.